Consider the following 81-residue polypeptide: Costars family protein ABRACL (81 aa).

N-acetylmethionine is present on Met-1.

This sequence belongs to the costars family.

This is Costars family protein ABRACL (ABRACL) from Bos taurus (Bovine).